The following is a 240-amino-acid chain: Adenosylcobinamide-GDP ribazoletransferase (240 aa).

Helical transmembrane passes span 31-51 (LLYYPLVGLLFGLLLWLASHL), 57-77 (APLHAALLLTAWVLLSGALHL), 109-129 (IAVVTLVLVLLLKFCALWVLV), 133-153 (VGAQLLLAPLIGRTAMLGLFL), and 185-205 (LFCLLLGGWVVLLAVAVFAWL).

This sequence belongs to the CobS family. It depends on Mg(2+) as a cofactor.

Its subcellular location is the cell inner membrane. The catalysed reaction is alpha-ribazole + adenosylcob(III)inamide-GDP = adenosylcob(III)alamin + GMP + H(+). It carries out the reaction alpha-ribazole 5'-phosphate + adenosylcob(III)inamide-GDP = adenosylcob(III)alamin 5'-phosphate + GMP + H(+). The protein operates within cofactor biosynthesis; adenosylcobalamin biosynthesis; adenosylcobalamin from cob(II)yrinate a,c-diamide: step 7/7. Joins adenosylcobinamide-GDP and alpha-ribazole to generate adenosylcobalamin (Ado-cobalamin). Also synthesizes adenosylcobalamin 5'-phosphate from adenosylcobinamide-GDP and alpha-ribazole 5'-phosphate. This Pseudomonas putida (strain GB-1) protein is Adenosylcobinamide-GDP ribazoletransferase.